Consider the following 851-residue polypeptide: UPF0182 protein CYA_1810 (851 aa).

Helical transmembrane passes span 7–27 (GLVL…LASF), 47–67 (VLAR…VVGS), 76–96 (ASTA…AWSL), 141–161 (FNLV…ELGL), 168–188 (LALS…LFLL), 220–240 (LPAT…FWAL), and 259–279 (WASS…FGLL).

Belongs to the UPF0182 family.

The protein resides in the cell membrane. The sequence is that of UPF0182 protein CYA_1810 from Synechococcus sp. (strain JA-3-3Ab) (Cyanobacteria bacterium Yellowstone A-Prime).